Here is a 607-residue protein sequence, read N- to C-terminus: LRR receptor kinase SERK2 (607 aa).

The signal sequence occupies residues 1-21 (MRELRVAVLIIAVSLPSFSAS). Topologically, residues 22-219 (DRQGDALYDM…QSGSHSSKIG (198 aa)) are extracellular. 2 N-linked (GlcNAc...) asparagine glycosylation sites follow: Asn36 and Asn110. 4 LRR repeats span residues 87-110 (LKYL…QFGN), 111-135 (LSSL…LGQL), 136-159 (SKLQ…LAKI), and 160-183 (SSLT…LFQV). N-linked (GlcNAc...) asparagine glycans are attached at residues Asn149, Asn171, Asn187, and Asn206. A helical membrane pass occupies residues 220–240 (IVLGTVGGVIGLLIVAALFLF). The Cytoplasmic segment spans residues 241–607 (CKGRRKSHLR…QEAIELSGGR (367 aa)). Residues 284 to 563 (FSERNVLGQG…VVRMLEGEGL (280 aa)) enclose the Protein kinase domain. ATP is bound by residues 290-298 (LGQGGFGKV) and Lys312. Asp411 serves as the catalytic Proton acceptor.

It belongs to the protein kinase superfamily. Ser/Thr protein kinase family.

The protein localises to the cell membrane. The catalysed reaction is L-seryl-[protein] + ATP = O-phospho-L-seryl-[protein] + ADP + H(+). The enzyme catalyses L-threonyl-[protein] + ATP = O-phospho-L-threonyl-[protein] + ADP + H(+). In terms of biological role, may be involved in the regulation of plant growth through the brassinosteroid (BR) signaling pathway. This Oryza sativa subsp. japonica (Rice) protein is LRR receptor kinase SERK2.